Here is a 353-residue protein sequence, read N- to C-terminus: UPF0283 membrane protein YcjF (353 aa).

Transmembrane regions (helical) follow at residues M70–T90, V100–V120, and E213–W233.

It belongs to the UPF0283 family.

The protein localises to the cell inner membrane. The protein is UPF0283 membrane protein YcjF of Escherichia coli O45:K1 (strain S88 / ExPEC).